The primary structure comprises 103 residues: Co-chaperonin GroES (103 aa).

Belongs to the GroES chaperonin family. In terms of assembly, heptamer of 7 subunits arranged in a ring. Interacts with the chaperonin GroEL.

It is found in the cytoplasm. Functionally, together with the chaperonin GroEL, plays an essential role in assisting protein folding. The GroEL-GroES system forms a nano-cage that allows encapsulation of the non-native substrate proteins and provides a physical environment optimized to promote and accelerate protein folding. GroES binds to the apical surface of the GroEL ring, thereby capping the opening of the GroEL channel. The sequence is that of Co-chaperonin GroES from Prochlorococcus marinus (strain SARG / CCMP1375 / SS120).